Here is a 170-residue protein sequence, read N- to C-terminus: Thialysine N-epsilon-acetyltransferase (170 aa).

One can recognise an N-acetyltransferase domain in the interval V4–A168. A substrate-binding site is contributed by F27–E28. K29 bears the N6-acetyllysine mark. E92 serves as a coordination point for substrate. Acetyl-CoA is bound by residues I94–V96, G102–S107, N133–R135, and Y140. The active-site Proton donor is the Y140. Position 152 (E152) interacts with substrate.

This sequence belongs to the acetyltransferase family. As to quaternary structure, homodimer. Widely expressed. Under physiological conditions, SSAT2 is expressed at lower level that SSAT1 (SSAT). Many tissues express only SSAT1, several tissues express both SSAT1 and SSAT2, and bone, cervix, ovary and pineal gland expressed only SSAT2.

The protein localises to the cytoplasm. The catalysed reaction is S-(2-aminoethyl)-L-cysteine + acetyl-CoA = S-(2-acetamidoethyl)-L-cysteine + CoA + H(+). The enzyme catalyses an alkane-alpha,omega-diamine + acetyl-CoA = an N-acetylalkane-alpha,omega-diamine + CoA + H(+). Functionally, catalyzes the N-acetylation of the amino acid thialysine (S-(2-aminoethyl)-L-cysteine), a L-lysine analog with the 4-methylene group substituted with a sulfur. May also catalyze acetylation of polyamines, such as norspermidine, spermidine or spermine. However, ability to acetylate polyamines is weak, suggesting that it does not act as a diamine acetyltransferase in vivo. In Homo sapiens (Human), this protein is Thialysine N-epsilon-acetyltransferase.